A 129-amino-acid polypeptide reads, in one-letter code: MTWLDDIRWDRDGLLPVIAQEAATGDVLMFAWMNREALARTAELGEAVYWSRSRGRLWHKGEESGHIQKVRDMRLDCDNDVLLLKVEQLGHEPSIACHTGRHSCFYQRYESGAWHAVELVLKDPEHIYR.

Position 76 (Asp76) interacts with Mg(2+). Cys77 provides a ligand contact to Zn(2+). Mg(2+) contacts are provided by Asp78 and Asp80. Cys97 and Cys104 together coordinate Zn(2+).

It belongs to the PRA-CH family. As to quaternary structure, homodimer. Requires Mg(2+) as cofactor. The cofactor is Zn(2+).

The protein resides in the cytoplasm. The enzyme catalyses 1-(5-phospho-beta-D-ribosyl)-5'-AMP + H2O = 1-(5-phospho-beta-D-ribosyl)-5-[(5-phospho-beta-D-ribosylamino)methylideneamino]imidazole-4-carboxamide. Its pathway is amino-acid biosynthesis; L-histidine biosynthesis; L-histidine from 5-phospho-alpha-D-ribose 1-diphosphate: step 3/9. Its function is as follows. Catalyzes the hydrolysis of the adenine ring of phosphoribosyl-AMP. This chain is Phosphoribosyl-AMP cyclohydrolase, found in Methylibium petroleiphilum (strain ATCC BAA-1232 / LMG 22953 / PM1).